The following is a 618-amino-acid chain: MQQPLIILGIGIVLALVSNVESGVLRKPVDEHEYEKWTNARGNEAAVPPPKYKMLRYAKKAINEPENRKMSCLFCTFAVDGVQALIAQNSTDNEIAAFLVNLCDLFDVEQPHVCKNIIYAFKDEVVFVLERSVFTPEEICGAFIANCGHSDKPLTHMWNITIPGGKPPIKPWPKIPDNKPTFKVLHLSDIHIDHQYVVGTEAYCQLDSALGTYAMCCRDYSQDSQGAPTNLKDKPIYVPAGPWGMPYLCDLPYQTFESAMKHISKTFKDLDYIIITGDFEAHDSWDYTEDLTRENMNNMTNVFLEYFPGVPVYVSIGNHEGVPQDAMAPHTMPEYDTRGPQWLYKIMSEMWSHWIPQEALDTVQYRASYAVYPKPGLKLISLNTIYCSEFNFYLYVNEVDPDATLEWLIEELQDSENKGELVHIISHIPPGDNYCLKGWSWNFFEIVKRYENTIAQMFYGHTHYDQFMVYYDMDDPNRRPFHFNWISPSLTTYDWLNPAYRIYEIDGGYEGATYTVKDAKTYFANVTEANMKNKEPEWVLSYDTREHYQMADFSPQSWSDLSDKLWTNTTLFRDYVRLYYRNHYNNECYTDYKCRYTFVCDIKKGRSYDESFCDHLTK.

Residues 1-22 form the signal peptide; sequence MQQPLIILGIGIVLALVSNVES. A Saposin B-type domain is found at 68 to 151; the sequence is RKMSCLFCTF…AFIANCGHSD (84 aa). 3 disulfides stabilise this stretch: cysteine 72-cysteine 147, cysteine 75-cysteine 140, and cysteine 103-cysteine 114. An N-linked (GlcNAc...) asparagine glycan is attached at asparagine 89. Asparagine 159 is a glycosylation site (N-linked (GlcNAc...) asparagine). Zn(2+)-binding residues include aspartate 189 and histidine 191. 2 disulfides stabilise this stretch: cysteine 204–cysteine 216 and cysteine 217–cysteine 249. Zn(2+) is bound at residue aspartate 278. A glycan (N-linked (GlcNAc...) asparagine) is linked at asparagine 298. The Zn(2+) site is built by asparagine 318, histidine 427, histidine 461, and histidine 463. The cysteines at positions 387 and 435 are disulfide-linked. 2 N-linked (GlcNAc...) asparagine glycosylation sites follow: asparagine 525 and asparagine 568. 2 disulfide bridges follow: cysteine 588-cysteine 594 and cysteine 600-cysteine 613.

This sequence belongs to the acid sphingomyelinase family. Zn(2+) serves as cofactor.

The protein resides in the secreted. The catalysed reaction is a sphingomyelin + H2O = phosphocholine + an N-acylsphing-4-enine + H(+). It catalyses the reaction an N-acyl-15-methylhexadecasphing-4-enine-1-phosphocholine + H2O = an N-acyl-15-methylhexadecasphing-4-enine + phosphocholine + H(+). It participates in lipid metabolism; sphingolipid metabolism. Its function is as follows. Sphingomyelin phosphodiesterase (sphingomyelinase) that converts sphingomyelin (N-acyl-sphingoid-1-phosphocholine) to ceramide (N-acyl-sphingoid base) and phosphocholine at acidic pH. Displays its enzymatic activity when secreted. May play distinct roles in signaling. This is Sphingomyelin phosphodiesterase 2 (asm-2) from Caenorhabditis elegans.